We begin with the raw amino-acid sequence, 234 residues long: NAD-reducing hydrogenase HoxS subunit gamma (234 aa).

One can recognise a 2Fe-2S ferredoxin-type domain in the interval 2–77 (SIQITIDGKT…GLNVEVNDPE (76 aa)). [2Fe-2S] cluster contacts are provided by C35, C46, C49, and C61. Residues 77–116 (ELVDMRKALVEFLFAEGNHNCPSCEKSGRCQLQAVGYEVD) enclose the 4Fe-4S His(Cys)3-ligated-type domain. The [4Fe-4S] cluster site is built by H95, C97, C100, C106, C145, C148, C151, and C198.

This sequence belongs to the complex I 75 kDa subunit family. In terms of assembly, tetramer of an alpha and a gamma subunits (flavin-containing dimer), and a delta and a nickel-containing beta subunits (hydrogenase dimer). [2Fe-2S] cluster serves as cofactor. It depends on [4Fe-4S] cluster as a cofactor.

It localises to the cytoplasm. It carries out the reaction H2 + NAD(+) = NADH + H(+). In terms of biological role, subunits alpha and gamma of HoxS constitute an NADH--oxidoreductase. This chain is NAD-reducing hydrogenase HoxS subunit gamma (hoxU), found in Cupriavidus necator (strain ATCC 17699 / DSM 428 / KCTC 22496 / NCIMB 10442 / H16 / Stanier 337) (Ralstonia eutropha).